The sequence spans 151 residues: Cytochrome c-type biogenesis protein CcmE 2 (151 aa).

Residues methionine 1 to arginine 8 lie on the Cytoplasmic side of the membrane. Residues leucine 9 to alanine 29 form a helical; Signal-anchor for type II membrane protein membrane-spanning segment. The Periplasmic segment spans residues leucine 30–glycine 151. Heme contacts are provided by histidine 124 and tyrosine 128.

It belongs to the CcmE/CycJ family.

It localises to the cell inner membrane. In terms of biological role, heme chaperone required for the biogenesis of c-type cytochromes. Transiently binds heme delivered by CcmC and transfers the heme to apo-cytochromes in a process facilitated by CcmF and CcmH. The chain is Cytochrome c-type biogenesis protein CcmE 2 from Pseudomonas fluorescens (strain Pf0-1).